Reading from the N-terminus, the 330-residue chain is Ornithine carbamoyltransferase (330 aa).

Residues 57–60 (STRT), Q84, R108, and 135–138 (HPTQ) contribute to the carbamoyl phosphate site. L-ornithine is bound by residues N168, D232, and 236–237 (SM). Carbamoyl phosphate-binding positions include 273–274 (CL) and R318.

Belongs to the aspartate/ornithine carbamoyltransferase superfamily. OTCase family.

Its subcellular location is the cytoplasm. The catalysed reaction is carbamoyl phosphate + L-ornithine = L-citrulline + phosphate + H(+). The protein operates within amino-acid biosynthesis; L-arginine biosynthesis; L-arginine from L-ornithine and carbamoyl phosphate: step 1/3. Its function is as follows. Reversibly catalyzes the transfer of the carbamoyl group from carbamoyl phosphate (CP) to the N(epsilon) atom of ornithine (ORN) to produce L-citrulline. The sequence is that of Ornithine carbamoyltransferase from Alkaliphilus metalliredigens (strain QYMF).